Consider the following 468-residue polypeptide: Glycine--tRNA ligase (468 aa).

Positions 101 and 170 each coordinate substrate. ATP is bound by residues 202 to 204, 212 to 217, 289 to 290, and 333 to 336; these read RNE, FRTREF, EL, and GLTR. 217–221 lines the substrate pocket; it reads FEQME. Residue 329–333 coordinates substrate; the sequence is EPAAG.

It belongs to the class-II aminoacyl-tRNA synthetase family. Homodimer.

It is found in the cytoplasm. The enzyme catalyses tRNA(Gly) + glycine + ATP = glycyl-tRNA(Gly) + AMP + diphosphate. Functionally, catalyzes the attachment of glycine to tRNA(Gly). The sequence is that of Glycine--tRNA ligase from Mycolicibacterium vanbaalenii (strain DSM 7251 / JCM 13017 / BCRC 16820 / KCTC 9966 / NRRL B-24157 / PYR-1) (Mycobacterium vanbaalenii).